We begin with the raw amino-acid sequence, 570 residues long: Sulfite reductase [NADPH] hemoprotein beta-component (570 aa).

Residues Cys-434, Cys-440, Cys-479, and Cys-483 each coordinate [4Fe-4S] cluster. Cys-483 contributes to the siroheme binding site.

This sequence belongs to the nitrite and sulfite reductase 4Fe-4S domain family. Alpha(8)-beta(8). The alpha component is a flavoprotein, the beta component is a hemoprotein. Requires siroheme as cofactor. [4Fe-4S] cluster serves as cofactor.

The catalysed reaction is hydrogen sulfide + 3 NADP(+) + 3 H2O = sulfite + 3 NADPH + 4 H(+). The protein operates within sulfur metabolism; hydrogen sulfide biosynthesis; hydrogen sulfide from sulfite (NADPH route): step 1/1. Functionally, component of the sulfite reductase complex that catalyzes the 6-electron reduction of sulfite to sulfide. This is one of several activities required for the biosynthesis of L-cysteine from sulfate. The polypeptide is Sulfite reductase [NADPH] hemoprotein beta-component (Escherichia coli O7:K1 (strain IAI39 / ExPEC)).